Reading from the N-terminus, the 64-residue chain is Potassium channel toxin kappa-KTx 4.1 (64 aa).

The N-terminal stretch at 1–26 (MKSTLMTASLLILVVLFIIDYASVYA) is a signal peptide. A propeptide spanning residues 27–38 (EFIDGEISLERE) is cleaved from the precursor. Disulfide bonds link C43–C61 and C47–C57.

Belongs to the short scorpion toxin superfamily. Potassium channel inhibitor kappa-KTx family. Kappa-KTx 4 subfamily. As to expression, expressed by the venom gland.

Its subcellular location is the secreted. Functionally, potassium channel inhibitor (Kv). This Heterometrus petersii (Asian forest scorpion) protein is Potassium channel toxin kappa-KTx 4.1.